We begin with the raw amino-acid sequence, 708 residues long: Polyribonucleotide nucleotidyltransferase (708 aa).

Asp-488 and Asp-494 together coordinate Mg(2+). A KH domain is found at 555–614; sequence PRIYTMKIPQKKIAEVIGKGGATIRQLTEETGTTIEIGDDGTIKIAATDGESAANAISRI. Residues 624–692 enclose the S1 motif domain; sequence GTIYEGKVVR…RQGRVRLSIK (69 aa).

Belongs to the polyribonucleotide nucleotidyltransferase family. As to quaternary structure, component of the RNA degradosome, which is a multiprotein complex involved in RNA processing and mRNA degradation. Requires Mg(2+) as cofactor.

The protein resides in the cytoplasm. The catalysed reaction is RNA(n+1) + phosphate = RNA(n) + a ribonucleoside 5'-diphosphate. Its function is as follows. Involved in mRNA degradation. Catalyzes the phosphorolysis of single-stranded polyribonucleotides processively in the 3'- to 5'-direction. The sequence is that of Polyribonucleotide nucleotidyltransferase from Pseudoalteromonas translucida (strain TAC 125).